The sequence spans 541 residues: Putative transferase YhbX (541 aa).

Residues 1–60 are Periplasmic-facing; that stretch reads MTVFNKFARTFKSHWLLYLCVIVFGITNLVASSGAHMVQRLLFFVLTILVVKRISSLPLR. A helical membrane pass occupies residues 61–81; the sequence is LLVAAPFVLLTAADMSISLYS. The Cytoplasmic segment spans residues 82–110; sequence WCTFGTTFNDGFAISVLQSDPDEVVKMLG. A helical membrane pass occupies residues 111–131; that stretch reads MYIPYLCAFAFLSLLFLAVII. Topologically, residues 132–141 are periplasmic; it reads KYDVSLPTKK. A helical membrane pass occupies residues 142–162; sequence VTGILLLIVISGSLFSACQFA. The Cytoplasmic portion of the chain corresponds to 163 to 264; that stretch reads YKDAKNKKAF…RKQIKLFNQA (102 aa). The chain crosses the membrane as a helical span at residues 265 to 285; the sequence is ISGAPYTALSVPLSLTADSVL. Over 286–541 the chain is Periplasmic; that stretch reads SHDIHNYPDN…QGNPTPEGQG (256 aa).

It belongs to the phosphoethanolamine transferase family.

The protein localises to the cell inner membrane. Probably does not transfer phosphoethanolamine to lipid A. The sequence is that of Putative transferase YhbX (yhbX) from Escherichia coli (strain K12).